The chain runs to 911 residues: Probable dipeptidyl-aminopeptidase B (911 aa).

Residues 1-39 are disordered; sequence MPRPRAAKEEETELLAQHQESPRPSSDGSEASASSISTT. Over 1 to 97 the chain is Cytoplasmic; sequence MPRPRAAKEE…TPVDKKARRT (97 aa). The span at 25–39 shows a compositional bias: low complexity; it reads SSDGSEASASSISTT. A helical; Signal-anchor for type II membrane protein transmembrane segment spans residues 98 to 118; sequence LWIVGTICAVGWALALVSFLM. Residues 119-911 lie on the Vacuolar side of the membrane; it reads NGNYKHSSTR…AQADARSLGR (793 aa). N-linked (GlcNAc...) asparagine glycans are attached at residues N268 and N564. The active-site Charge relay system is the S755. The N-linked (GlcNAc...) asparagine glycan is linked to N809. Residues D832 and H865 each act as charge relay system in the active site.

This sequence belongs to the peptidase S9B family.

It is found in the vacuole membrane. The catalysed reaction is Release of an N-terminal dipeptide, Xaa-Yaa-|-Zaa-, from a polypeptide, preferentially when Yaa is Pro, provided Zaa is neither Pro nor hydroxyproline.. Its function is as follows. Type IV dipeptidyl-peptidase which removes N-terminal dipeptides sequentially from polypeptides having unsubstituted N-termini provided that the penultimate residue is proline. The chain is Probable dipeptidyl-aminopeptidase B (DAPB) from Phaeosphaeria nodorum (strain SN15 / ATCC MYA-4574 / FGSC 10173) (Glume blotch fungus).